Consider the following 447-residue polypeptide: Cobyrinate a,c-diamide synthase (447 aa).

One can recognise a GATase cobBQ-type domain in the interval K252 to Y439. Catalysis depends on C331, which acts as the Nucleophile.

Belongs to the CobB/CbiA family. It depends on Mg(2+) as a cofactor.

The enzyme catalyses cob(II)yrinate + 2 L-glutamine + 2 ATP + 2 H2O = cob(II)yrinate a,c diamide + 2 L-glutamate + 2 ADP + 2 phosphate + 2 H(+). It catalyses the reaction Ni-sirohydrochlorin + 2 L-glutamine + 2 ATP + 2 H2O = Ni-sirohydrochlorin a,c-diamide + 2 L-glutamate + 2 ADP + 2 phosphate + 2 H(+). Its pathway is cofactor biosynthesis; adenosylcobalamin biosynthesis; cob(II)yrinate a,c-diamide from sirohydrochlorin (anaerobic route): step 10/10. In terms of biological role, catalyzes the ATP-dependent amidation of the two carboxylate groups at positions a and c of cobyrinate, using either L-glutamine or ammonia as the nitrogen source. Involved in the biosynthesis of the unique nickel-containing tetrapyrrole coenzyme F430, the prosthetic group of methyl-coenzyme M reductase (MCR), which plays a key role in methanogenesis and anaerobic methane oxidation. Catalyzes the ATP-dependent amidation of the two carboxylate groups at positions a and c of Ni-sirohydrochlorin, using L-glutamine or ammonia as the nitrogen source. This Methanococcus maripaludis (strain C5 / ATCC BAA-1333) protein is Cobyrinate a,c-diamide synthase.